The following is a 405-amino-acid chain: Tryptophan synthase beta chain (405 aa).

An N6-(pyridoxal phosphate)lysine modification is found at Lys98.

The protein belongs to the TrpB family. Tetramer of two alpha and two beta chains. It depends on pyridoxal 5'-phosphate as a cofactor.

The enzyme catalyses (1S,2R)-1-C-(indol-3-yl)glycerol 3-phosphate + L-serine = D-glyceraldehyde 3-phosphate + L-tryptophan + H2O. It participates in amino-acid biosynthesis; L-tryptophan biosynthesis; L-tryptophan from chorismate: step 5/5. The beta subunit is responsible for the synthesis of L-tryptophan from indole and L-serine. The protein is Tryptophan synthase beta chain of Xanthomonas oryzae pv. oryzae (strain PXO99A).